Consider the following 58-residue polypeptide: Large ribosomal subunit protein bL32 (58 aa).

The protein belongs to the bacterial ribosomal protein bL32 family.

The sequence is that of Large ribosomal subunit protein bL32 from Anaplasma marginale (strain Florida).